The chain runs to 764 residues: Chloride anion exchanger (764 aa).

The Cytoplasmic portion of the chain corresponds to 1–76 (MIEPFGNQYI…YRLKEWLLSD (76 aa)). The chain crosses the membrane as a helical span at residues 77–97 (IVSGISTGIVAVLQGLAFALL). Residues 98-99 (VD) lie on the Extracellular side of the membrane. A helical membrane pass occupies residues 100–120 (IPPVYGLYASFFPAIIYLFFG). Over 121–124 (TSRH) the chain is Cytoplasmic. The helical transmembrane segment at 125–145 (ISVGPFPILSMMVGLAVSGAV) threads the bilayer. At 146–175 (SKAVPDRNATTLGLPNNSNNSSLLDDERVR) the chain is on the extracellular side. Asparagine 153, asparagine 161, and asparagine 165 each carry an N-linked (GlcNAc...) asparagine glycan. The chain crosses the membrane as a helical span at residues 176–196 (VAAAASVTVLSGIIQLAFGIL). Arginine 197 is a topological domain (cytoplasmic). The helical transmembrane segment at 198 to 218 (IGFVVIYLSESLISGFTTAAA) threads the bilayer. Over 219–257 (VHVLVSQLKFIFQLTVPSHTDPVSIFKVLYSVFSQIEKT) the chain is Extracellular. A helical membrane pass occupies residues 258-278 (NIADLVTALIVLLVVSIVKEI). Over 279–342 (NQRFKDKLPV…VETFQNTVGD (64 aa)) the chain is Cytoplasmic. A helical membrane pass occupies residues 343–363 (CFGIAMVAFAVAFSVASVYSL). At 364-374 (KYDYPLDGNQE) the chain is on the extracellular side. Residues 375–395 (LIALGLGNIVCGVFRGFAGST) form a helical membrane-spanning segment. Residues 396-411 (ALSRSAVQESTGGKTQ) are Cytoplasmic-facing. A helical membrane pass occupies residues 412-432 (IAGLIGAIIVLIVVLAIGFLL). Over 433–469 (APLQKSVLAALALGNLKGMLMQFAEIGRLWRKDKYDC) the chain is Extracellular. A helical membrane pass occupies residues 470 to 490 (LIWIMTFIFTIVLGLGLGLAA). The Cytoplasmic portion of the chain corresponds to 491-701 (SVAFQLLTIV…EKLNRYEFFD (211 aa)). Positions 525–720 (DYYDMYEPEG…LTIHDAVLHI (196 aa)) constitute an STAS domain. Positions 761-764 (ETKF) match the PDZ-binding motif.

It belongs to the SLC26A/SulP transporter (TC 2.A.53) family. In terms of assembly, interacts with CFTR, SLC26A6 and NHERF1. Interacts with PDZK1. Interacts (via PDZ-binding motif) with NHERF4 (via the third PDZ domain); interaction leads to decreased expression of SLC26A3 on the cell membrane resulting in its reduced exchanger activity. Post-translationally, N-glycosylation is required for efficient cell surface expression, and protection from proteolytic degradation. Expressed in the colon. Expression is significantly decreased in adenomas (polyps) and adenocarcinomas of the colon.

The protein resides in the apical cell membrane. Its subcellular location is the membrane. It is found in the cell membrane. It catalyses the reaction hydrogencarbonate(in) + 2 chloride(out) = hydrogencarbonate(out) + 2 chloride(in). Inhibited by acidic pH. Its function is as follows. Mediates chloride-bicarbonate exchange with a chloride bicarbonate stoichiometry of 2:1 in the intestinal epithelia. Plays a role in the chloride and bicarbonate homeostasis during sperm epididymal maturation and capacitation. The protein is Chloride anion exchanger (SLC26A3) of Homo sapiens (Human).